The sequence spans 78 residues: ATP synthase subunit c (78 aa).

2 helical membrane-spanning segments follow: residues 12-32 (IGAG…GHVV) and 54-74 (FIGI…ALLL).

The protein belongs to the ATPase C chain family. F-type ATPases have 2 components, F(1) - the catalytic core - and F(0) - the membrane proton channel. F(1) has five subunits: alpha(3), beta(3), gamma(1), delta(1), epsilon(1). F(0) has four main subunits: a(1), b(1), b'(1) and c(10-14). The alpha and beta chains form an alternating ring which encloses part of the gamma chain. F(1) is attached to F(0) by a central stalk formed by the gamma and epsilon chains, while a peripheral stalk is formed by the delta, b and b' chains.

The protein localises to the cellular chromatophore membrane. Its function is as follows. F(1)F(0) ATP synthase produces ATP from ADP in the presence of a proton or sodium gradient. F-type ATPases consist of two structural domains, F(1) containing the extramembraneous catalytic core and F(0) containing the membrane proton channel, linked together by a central stalk and a peripheral stalk. During catalysis, ATP synthesis in the catalytic domain of F(1) is coupled via a rotary mechanism of the central stalk subunits to proton translocation. Key component of the F(0) channel; it plays a direct role in translocation across the membrane. A homomeric c-ring of between 10-14 subunits forms the central stalk rotor element with the F(1) delta and epsilon subunits. The chain is ATP synthase subunit c from Rhodobacter capsulatus (Rhodopseudomonas capsulata).